A 617-amino-acid chain; its full sequence is UvrABC system protein C (617 aa).

In terms of domain architecture, GIY-YIG spans 12–91 (EKPGVYLMKD…IKKYKPKYNV (80 aa)). The region spanning 203-238 (EWLVEKLKEEMQKAADELRFEEAARLRDQIFAIEKI) is the UVR domain.

Belongs to the UvrC family. Interacts with UvrB in an incision complex.

Its subcellular location is the cytoplasm. Functionally, the UvrABC repair system catalyzes the recognition and processing of DNA lesions. UvrC both incises the 5' and 3' sides of the lesion. The N-terminal half is responsible for the 3' incision and the C-terminal half is responsible for the 5' incision. The chain is UvrABC system protein C from Caldanaerobacter subterraneus subsp. tengcongensis (strain DSM 15242 / JCM 11007 / NBRC 100824 / MB4) (Thermoanaerobacter tengcongensis).